Here is a 110-residue protein sequence, read N- to C-terminus: UPF0060 membrane protein Bcep1808_1236 (110 aa).

3 helical membrane-spanning segments follow: residues Ala9 to Leu29, Pro34 to Leu54, and Tyr66 to Leu86.

Belongs to the UPF0060 family.

The protein resides in the cell inner membrane. The chain is UPF0060 membrane protein Bcep1808_1236 from Burkholderia vietnamiensis (strain G4 / LMG 22486) (Burkholderia cepacia (strain R1808)).